The primary structure comprises 408 residues: LL-diaminopimelate aminotransferase (408 aa).

Residues Tyr-15 and Gly-42 each coordinate substrate. Pyridoxal 5'-phosphate contacts are provided by residues Tyr-72, 108 to 109 (SK), Tyr-132, Asn-187, Tyr-218, and 246 to 248 (SFS). Positions 109, 132, and 187 each coordinate substrate. Lys-249 carries the post-translational modification N6-(pyridoxal phosphate)lysine. The pyridoxal 5'-phosphate site is built by Arg-257 and Asn-292. Substrate-binding residues include Asn-292 and Arg-388.

Belongs to the class-I pyridoxal-phosphate-dependent aminotransferase family. LL-diaminopimelate aminotransferase subfamily. Homodimer. Requires pyridoxal 5'-phosphate as cofactor.

The enzyme catalyses (2S,6S)-2,6-diaminopimelate + 2-oxoglutarate = (S)-2,3,4,5-tetrahydrodipicolinate + L-glutamate + H2O + H(+). The protein operates within amino-acid biosynthesis; L-lysine biosynthesis via DAP pathway; LL-2,6-diaminopimelate from (S)-tetrahydrodipicolinate (aminotransferase route): step 1/1. Its function is as follows. Involved in the synthesis of meso-diaminopimelate (m-DAP or DL-DAP), required for both lysine and peptidoglycan biosynthesis. Catalyzes the direct conversion of tetrahydrodipicolinate to LL-diaminopimelate. In Prochlorococcus marinus (strain MIT 9211), this protein is LL-diaminopimelate aminotransferase.